We begin with the raw amino-acid sequence, 416 residues long: UDP-N-acetylglucosamine 1-carboxyvinyltransferase (416 aa).

Residue 22–23 (KN) participates in phosphoenolpyruvate binding. Arg-91 serves as a coordination point for UDP-N-acetyl-alpha-D-glucosamine. Cys-115 serves as the catalytic Proton donor. Cys-115 carries the 2-(S-cysteinyl)pyruvic acid O-phosphothioketal modification. Residues 120–124 (RPIDL), Asp-305, and Ile-327 contribute to the UDP-N-acetyl-alpha-D-glucosamine site.

This sequence belongs to the EPSP synthase family. MurA subfamily.

It localises to the cytoplasm. The enzyme catalyses phosphoenolpyruvate + UDP-N-acetyl-alpha-D-glucosamine = UDP-N-acetyl-3-O-(1-carboxyvinyl)-alpha-D-glucosamine + phosphate. It functions in the pathway cell wall biogenesis; peptidoglycan biosynthesis. In terms of biological role, cell wall formation. Adds enolpyruvyl to UDP-N-acetylglucosamine. The protein is UDP-N-acetylglucosamine 1-carboxyvinyltransferase of Buchnera aphidicola subsp. Acyrthosiphon pisum (strain 5A).